Consider the following 316-residue polypeptide: tRNA dimethylallyltransferase (316 aa).

12 to 19 (GPTASGKT) is a binding site for ATP. 14-19 (TASGKT) contributes to the substrate binding site. Interaction with substrate tRNA regions lie at residues 37-40 (DSAL) and 161-165 (QRILR).

The protein belongs to the IPP transferase family. Monomer. Mg(2+) is required as a cofactor.

The enzyme catalyses adenosine(37) in tRNA + dimethylallyl diphosphate = N(6)-dimethylallyladenosine(37) in tRNA + diphosphate. Its function is as follows. Catalyzes the transfer of a dimethylallyl group onto the adenine at position 37 in tRNAs that read codons beginning with uridine, leading to the formation of N6-(dimethylallyl)adenosine (i(6)A). The chain is tRNA dimethylallyltransferase from Idiomarina loihiensis (strain ATCC BAA-735 / DSM 15497 / L2-TR).